Here is a 99-residue protein sequence, read N- to C-terminus: Plastocyanin A'/A'' (99 aa).

The 99-residue stretch at 1 to 99 (IEVLLGSDDG…AGMVGKVTVN (99 aa)) folds into the Plastocyanin-like domain. Cu cation is bound by residues histidine 37, cysteine 84, histidine 87, and methionine 92.

Belongs to the plastocyanin family. Cu(2+) is required as a cofactor.

Its subcellular location is the plastid. The protein resides in the chloroplast thylakoid membrane. Its function is as follows. Participates in electron transfer between P700 and the cytochrome b6-f complex in photosystem I. This chain is Plastocyanin A'/A'', found in Nicotiana tabacum (Common tobacco).